Here is a 1151-residue protein sequence, read N- to C-terminus: ATP-dependent helicase/deoxyribonuclease subunit B (1151 aa).

Residues 1-273 enclose the UvrD-like helicase ATP-binding domain; it reads MALRLVLGRA…LALAAGVRVE (273 aa). 8-15 contributes to the ATP binding site; that stretch reads GRAGSGKT. The UvrD-like helicase C-terminal domain occupies 282-578; it reads PPRFREAPAL…KLRLIPPALD (297 aa). [4Fe-4S] cluster contacts are provided by C788, C1107, C1110, and C1116.

Belongs to the helicase family. AddB/RexB type 1 subfamily. In terms of assembly, heterodimer of AddA and AddB. The cofactor is Mg(2+). [4Fe-4S] cluster serves as cofactor.

In terms of biological role, the heterodimer acts as both an ATP-dependent DNA helicase and an ATP-dependent, dual-direction single-stranded exonuclease. Recognizes the chi site generating a DNA molecule suitable for the initiation of homologous recombination. The AddB subunit has 5' -&gt; 3' nuclease activity but not helicase activity. The sequence is that of ATP-dependent helicase/deoxyribonuclease subunit B from Moorella thermoacetica (strain ATCC 39073 / JCM 9320).